A 198-amino-acid polypeptide reads, in one-letter code: Recombination protein RecR (198 aa).

Residues 57–72 (CSVCGHITDRDPCYIC) form a C4-type zinc finger. The region spanning 80 to 175 (SVVCVVQEPK…KVTRIAHGLP (96 aa)) is the Toprim domain.

Belongs to the RecR family.

Its function is as follows. May play a role in DNA repair. It seems to be involved in an RecBC-independent recombinational process of DNA repair. It may act with RecF and RecO. The protein is Recombination protein RecR of Bacillus cytotoxicus (strain DSM 22905 / CIP 110041 / 391-98 / NVH 391-98).